Here is a 50-residue protein sequence, read N- to C-terminus: Large ribosomal subunit protein bL33 (50 aa).

Belongs to the bacterial ribosomal protein bL33 family.

The polypeptide is Large ribosomal subunit protein bL33 (Sulfurovum sp. (strain NBC37-1)).